The sequence spans 267 residues: Kit ligand (267 aa).

The N-terminal stretch at 1–25 is a signal peptide; sequence MKKTQTWIITCIYLQLLLFNPLVHT. Residue Gln-26 is modified to Pyrrolidone carboxylic acid. Residues 26-215 lie on the Extracellular side of the membrane; that stretch reads QGICRNRVTD…SNSIEDSSLQ (190 aa). Disulfide bonds link Cys-29–Cys-114 and Cys-68–Cys-164. 4 N-linked (GlcNAc...) asparagine glycosylation sites follow: Asn-90, Asn-97, Asn-145, and Asn-196. A helical membrane pass occupies residues 216-238; sequence WAAVALPAFFSLVIGFAFGALYW. Residues 239–267 are Cytoplasmic-facing; the sequence is KKKQPNLTRTVENRQINEEDNEISMLQEK.

The protein belongs to the SCF family. As to quaternary structure, homodimer, non-covalently linked. Heterotetramer with KIT, binding two KIT molecules; thereby mediates KIT dimerization and subsequent activation by autophosphorylation. Post-translationally, a soluble form is produced by proteolytic processing of the extracellular domain.

Its subcellular location is the cytoplasm. It localises to the cytoskeleton. The protein resides in the cell membrane. It is found in the cell projection. The protein localises to the lamellipodium. Its subcellular location is the filopodium. It localises to the secreted. In terms of biological role, ligand for the receptor-type protein-tyrosine kinase KIT. Plays an essential role in the regulation of cell survival and proliferation, hematopoiesis, stem cell maintenance, gametogenesis, mast cell development, migration and function, and in melanogenesis. KITLG/SCF binding can activate several signaling pathways. Promotes phosphorylation of PIK3R1, the regulatory subunit of phosphatidylinositol 3-kinase, and subsequent activation of the kinase AKT1. KITLG/SCF and KIT also transmit signals via GRB2 and activation of RAS, RAF1 and the MAP kinases MAPK1/ERK2 and/or MAPK3/ERK1. KITLG/SCF and KIT promote activation of STAT family members STAT1, STAT3 and STAT5. KITLG/SCF and KIT promote activation of PLCG1, leading to the production of the cellular signaling molecules diacylglycerol and inositol 1,4,5-trisphosphate. KITLG/SCF acts synergistically with other cytokines, probably interleukins. The chain is Kit ligand (KITLG) from Ovis aries (Sheep).